The sequence spans 242 residues: 1-(5-phosphoribosyl)-5-[(5-phosphoribosylamino)methylideneamino] imidazole-4-carboxamide isomerase (242 aa).

Aspartate 8 acts as the Proton acceptor in catalysis. Aspartate 129 serves as the catalytic Proton donor.

This sequence belongs to the HisA/HisF family.

It localises to the cytoplasm. It carries out the reaction 1-(5-phospho-beta-D-ribosyl)-5-[(5-phospho-beta-D-ribosylamino)methylideneamino]imidazole-4-carboxamide = 5-[(5-phospho-1-deoxy-D-ribulos-1-ylimino)methylamino]-1-(5-phospho-beta-D-ribosyl)imidazole-4-carboxamide. Its pathway is amino-acid biosynthesis; L-histidine biosynthesis; L-histidine from 5-phospho-alpha-D-ribose 1-diphosphate: step 4/9. This Clostridium botulinum (strain Langeland / NCTC 10281 / Type F) protein is 1-(5-phosphoribosyl)-5-[(5-phosphoribosylamino)methylideneamino] imidazole-4-carboxamide isomerase.